A 269-amino-acid polypeptide reads, in one-letter code: Hydroxyethylthiazole kinase (269 aa).

Substrate is bound at residue Met-41. The ATP site is built by Arg-117 and Ser-163. Gly-190 serves as a coordination point for substrate.

It belongs to the Thz kinase family. Mg(2+) serves as cofactor.

It carries out the reaction 5-(2-hydroxyethyl)-4-methylthiazole + ATP = 4-methyl-5-(2-phosphooxyethyl)-thiazole + ADP + H(+). It participates in cofactor biosynthesis; thiamine diphosphate biosynthesis; 4-methyl-5-(2-phosphoethyl)-thiazole from 5-(2-hydroxyethyl)-4-methylthiazole: step 1/1. Functionally, catalyzes the phosphorylation of the hydroxyl group of 4-methyl-5-beta-hydroxyethylthiazole (THZ). This is Hydroxyethylthiazole kinase from Latilactobacillus sakei subsp. sakei (strain 23K) (Lactobacillus sakei subsp. sakei).